The following is a 549-amino-acid chain: Glucose-6-phosphate isomerase (549 aa).

The Proton donor role is filled by Glu-355. Catalysis depends on residues His-386 and Lys-514.

It belongs to the GPI family.

Its subcellular location is the cytoplasm. It catalyses the reaction alpha-D-glucose 6-phosphate = beta-D-fructose 6-phosphate. It functions in the pathway carbohydrate biosynthesis; gluconeogenesis. Its pathway is carbohydrate degradation; glycolysis; D-glyceraldehyde 3-phosphate and glycerone phosphate from D-glucose: step 2/4. Its function is as follows. Catalyzes the reversible isomerization of glucose-6-phosphate to fructose-6-phosphate. The protein is Glucose-6-phosphate isomerase of Aeromonas salmonicida (strain A449).